A 147-amino-acid polypeptide reads, in one-letter code: MATVYDVPADLLIKRVAERLKDMVAPPEWAKYVKTGVHKERSPEQDDWWYLRLASIFRRVYIDGPVGIERLRTFYGGRKRRGSKPPKFRKGSGAIVRNALHQLEQLGFVKKTREGRVVTPMGRSFLDKVATELKSELVSEIPALEKY.

The protein belongs to the eukaryotic ribosomal protein eS19 family. As to quaternary structure, part of the 30S ribosomal subunit.

Its function is as follows. May be involved in maturation of the 30S ribosomal subunit. This chain is Small ribosomal subunit protein eS19, found in Archaeoglobus fulgidus (strain ATCC 49558 / DSM 4304 / JCM 9628 / NBRC 100126 / VC-16).